We begin with the raw amino-acid sequence, 329 residues long: GMP reductase (329 aa).

The Thioimidate intermediate role is filled by Cys-178. 207-230 (IIADGGIRNNGDIAKSIRFGATMC) contributes to the NADP(+) binding site.

The protein belongs to the IMPDH/GMPR family. GuaC type 2 subfamily.

It carries out the reaction IMP + NH4(+) + NADP(+) = GMP + NADPH + 2 H(+). In terms of biological role, catalyzes the irreversible NADPH-dependent deamination of GMP to IMP. It functions in the conversion of nucleobase, nucleoside and nucleotide derivatives of G to A nucleotides, and in maintaining the intracellular balance of A and G nucleotides. This Lacticaseibacillus paracasei (strain ATCC 334 / BCRC 17002 / CCUG 31169 / CIP 107868 / KCTC 3260 / NRRL B-441) (Lactobacillus paracasei) protein is GMP reductase.